Reading from the N-terminus, the 284-residue chain is 4-diphosphocytidyl-2-C-methyl-D-erythritol kinase (284 aa).

Lysine 14 is an active-site residue. 98 to 108 (PMGGGIGGGSS) is a binding site for ATP. Aspartate 140 is a catalytic residue.

The protein belongs to the GHMP kinase family. IspE subfamily.

The catalysed reaction is 4-CDP-2-C-methyl-D-erythritol + ATP = 4-CDP-2-C-methyl-D-erythritol 2-phosphate + ADP + H(+). Its pathway is isoprenoid biosynthesis; isopentenyl diphosphate biosynthesis via DXP pathway; isopentenyl diphosphate from 1-deoxy-D-xylulose 5-phosphate: step 3/6. In terms of biological role, catalyzes the phosphorylation of the position 2 hydroxy group of 4-diphosphocytidyl-2C-methyl-D-erythritol. The protein is 4-diphosphocytidyl-2-C-methyl-D-erythritol kinase of Shewanella loihica (strain ATCC BAA-1088 / PV-4).